We begin with the raw amino-acid sequence, 553 residues long: Solute carrier family 22 member 4 (553 aa).

The Cytoplasmic portion of the chain corresponds to 1–20 (MRDYDEVIAFLGEWGPFQRL). The helical transmembrane segment at 21 to 41 (IFFLLSASIIPNGFNGMSVVF) threads the bilayer. Residues 42 to 142 (LAGTPEHRCL…NLVCEDDWKT (101 aa)) lie on the Extracellular side of the membrane. Asparagine 57, asparagine 64, and asparagine 91 each carry an N-linked (GlcNAc...) asparagine glycan. A helical membrane pass occupies residues 143-163 (PLTTSLFFVGVLCGSFVSGQL). Residues 164-171 (SDRFGRKK) are Cytoplasmic-facing. The helical transmembrane segment at 172-192 (VLFATMAVQTGFSFVQIFSTN) threads the bilayer. Over 193-197 (WEMFT) the chain is Extracellular. A helical membrane pass occupies residues 198–218 (VLFAIVGMGQISNYVVAFILG). Position 218–225 (218–225 (GTEILSKS)) interacts with ATP. Topologically, residues 219 to 232 (TEILSKSVRIIFST) are cytoplasmic. The chain crosses the membrane as a helical span at residues 233–253 (LGVCTFFAIGYMVLPLFAYFI). The Extracellular segment spans residues 254–257 (RDWR). A helical membrane pass occupies residues 258–278 (MLLLALTLPGLFCVPLWWFIP). Residues 279–339 (ESPRWLISQR…IILDLFRTRN (61 aa)) are Cytoplasmic-facing. A helical transmembrane segment spans residues 340–360 (IATITVMAVMLWMLTSVGYFA). Over 361-373 (LSLNVPNLHGDVY) the chain is Extracellular. A helical transmembrane segment spans residues 374 to 394 (LNCFLSGLIEVPAYFTAWLLL). Residues 395–400 (RTLPRR) lie on the Cytoplasmic side of the membrane. The helical transmembrane segment at 401–421 (YIIAGVLFWGGGVLLLIQVVP) threads the bilayer. At 422–428 (EDYNFVS) the chain is on the extracellular side. The chain crosses the membrane as a helical span at residues 429 to 449 (IGLVMLGKFGITSAFSMLYVF). Residues 450 to 462 (TAELYPTLVRNMA) are Cytoplasmic-facing. A helical membrane pass occupies residues 463–483 (VGITSMASRVGSIIAPYFVYL). Residues 484-488 (GAYNR) are Extracellular-facing. Residues 489–509 (LLPYILMGSLTVLIGIITLFF) traverse the membrane as a helical segment. Residues 510 to 553 (PESFGVTLPENLEQMQKVRGFRCGKKSTVSVDREESPKVLITAF) lie on the Cytoplasmic side of the membrane.

The protein belongs to the major facilitator (TC 2.A.1) superfamily. Organic cation transporter (TC 2.A.1.19) family. Interacts with PDZK1. In terms of tissue distribution, expressed in kidney. Expressed in small intestines. Expressed in liver in non-parenchymal liver tissue such as sinusoidal vessels. Weakly expressed in lung and brain. Expressed in testis and spleen. Expressed in heart.

Its subcellular location is the apical cell membrane. The protein localises to the mitochondrion membrane. The protein resides in the basal cell membrane. It catalyses the reaction ergothioneine(out) + Na(+)(out) = ergothioneine(in) + Na(+)(in). The enzyme catalyses acetylcholine(in) = acetylcholine(out). The catalysed reaction is (R)-carnitine(out) + Na(+)(out) = (R)-carnitine(in) + Na(+)(in). It carries out the reaction glycine betaine(out) + Na(+)(out) = glycine betaine(in) + Na(+)(in). Allosterically activated by intracellular ATP. Functionally, transporter that mediates the transport of endogenous and microbial zwitterions and organic cations. Functions as a Na(+)-dependent and pH-dependent high affinity microbial symporter of potent food-derived antioxidant ergothioeine. Transports one sodium ion with one ergothioeine molecule. Involved in the absorption of ergothioneine from the luminal/apical side of the small intestine and renal tubular cells, and into non-parenchymal liver cells, thereby contributing to maintain steady-state ergothioneine level in the body. Also mediates the bidirectional transport of acetycholine, although the exact transport mechanism has not been fully identified yet. Most likely exports anti-inflammatory acetylcholine in non-neuronal tissues, thereby contributing to the non-neuronal cholinergic system. Displays a general physiological role linked to better survival by controlling inflammation and oxidative stress, which may be related to ergothioneine and acetycholine transports. May also function as a low-affinity Na(+)-dependent transporter of L-carnitine through the mitochondrial membrane, thereby maintaining intracellular carnitine homeostasis. May contribute to regulate the transport of cationic compounds in testis across the blood-testis-barrier. This is Solute carrier family 22 member 4 from Mus musculus (Mouse).